The sequence spans 209 residues: MLQFITIPNLMDYRVTLKLMEDYVNKVISDNEPEIVYLVEHSEVYTAGTNYKQEELLNYGDIPVIYTGRGGKFTFHGPGQRVIYPILNLASPNRHKDLKLYIKMLEEWIINSLNYFGIKTYIIKDKVGIWVKVRKGEFAKIAAIGVRVRKWVTYHGVAINISTDLSKFSGIIPCGLENSLVTSLNQLGIHIEMSEFDKIIQTEFNKIFK.

The BPL/LPL catalytic domain maps to 30–209 (DNEPEIVYLV…IQTEFNKIFK (180 aa)). Substrate is bound by residues 69-76 (RGGKFTFH), 143-145 (AIG), and 156-158 (GVA). Cys174 acts as the Acyl-thioester intermediate in catalysis.

It belongs to the LipB family.

It localises to the cytoplasm. The enzyme catalyses octanoyl-[ACP] + L-lysyl-[protein] = N(6)-octanoyl-L-lysyl-[protein] + holo-[ACP] + H(+). It functions in the pathway protein modification; protein lipoylation via endogenous pathway; protein N(6)-(lipoyl)lysine from octanoyl-[acyl-carrier-protein]: step 1/2. Functionally, catalyzes the transfer of endogenously produced octanoic acid from octanoyl-acyl-carrier-protein onto the lipoyl domains of lipoate-dependent enzymes. Lipoyl-ACP can also act as a substrate although octanoyl-ACP is likely to be the physiological substrate. The chain is Octanoyltransferase from Rickettsia felis (strain ATCC VR-1525 / URRWXCal2) (Rickettsia azadi).